Here is a 188-residue protein sequence, read N- to C-terminus: Elongation factor P (188 aa).

Belongs to the elongation factor P family.

Its subcellular location is the cytoplasm. It participates in protein biosynthesis; polypeptide chain elongation. Functionally, involved in peptide bond synthesis. Stimulates efficient translation and peptide-bond synthesis on native or reconstituted 70S ribosomes in vitro. Probably functions indirectly by altering the affinity of the ribosome for aminoacyl-tRNA, thus increasing their reactivity as acceptors for peptidyl transferase. The polypeptide is Elongation factor P (Stutzerimonas stutzeri (strain A1501) (Pseudomonas stutzeri)).